Consider the following 65-residue polypeptide: Ubiquinol-cytochrome-c reductase complex assembly factor 6 (65 aa).

At 1–9 (MPAGVSWPR) the chain is on the mitochondrial matrix side. The chain crosses the membrane as a helical; Signal-anchor for type II membrane protein span at residues 10–32 (YLRMFAASVLSMFAGAQVVHHYY). Over 33-65 (RPDLSIPEIPPKPGELRTELLGLKERQMDSQKQ) the chain is Mitochondrial intermembrane.

This sequence belongs to the UQCC6 family. As to expression, highly expressed in skeletal and cardiac muscle (at protein level).

The protein localises to the mitochondrion inner membrane. Functionally, required for the assembly and stability of the mitochondrial ubiquinol-cytochrome c reductase complex (complex III (CIII) or cytochrome b-c1 complex), a multisubunit transmembrane complex that is part of the mitochondrial electron transport chain (ETC) which drives oxidative phosphorylation. Mediates early complex III biogenesis. Participates in regulating the levels of electron transport chain proteins, and therefore energy supply, in response to changes in energy demand. Also required for cytochrome c oxidase complex (complex IV) assembly. The chain is Ubiquinol-cytochrome-c reductase complex assembly factor 6 (uqcc6) from Danio rerio (Zebrafish).